The sequence spans 425 residues: Dihydroorotase (425 aa).

Zn(2+)-binding residues include H61 and H63. Substrate contacts are provided by residues 63 to 65 and N95; that span reads HLR. Zn(2+) is bound by residues D153, H180, and H233. N279 serves as a coordination point for substrate. D306 contributes to the Zn(2+) binding site. D306 is a catalytic residue. A substrate-binding site is contributed by H310.

Belongs to the metallo-dependent hydrolases superfamily. DHOase family. Class I DHOase subfamily. It depends on Zn(2+) as a cofactor.

It catalyses the reaction (S)-dihydroorotate + H2O = N-carbamoyl-L-aspartate + H(+). Its pathway is pyrimidine metabolism; UMP biosynthesis via de novo pathway; (S)-dihydroorotate from bicarbonate: step 3/3. Functionally, catalyzes the reversible cyclization of carbamoyl aspartate to dihydroorotate. The sequence is that of Dihydroorotase from Geotalea daltonii (strain DSM 22248 / JCM 15807 / FRC-32) (Geobacter daltonii).